The following is a 956-amino-acid chain: Thrombospondin-3 (956 aa).

A signal peptide spans 1-22 (METQELRGALALLLLCFFTSAS). The Laminin G-like domain occupies 23–193 (QDLQVIDLLT…VESMKIILGG (171 aa)). Cystine bridges form between cysteine 278–cysteine 289, cysteine 283–cysteine 300, cysteine 303–cysteine 314, cysteine 320–cysteine 332, cysteine 326–cysteine 341, cysteine 344–cysteine 368, cysteine 374–cysteine 388, cysteine 382–cysteine 397, cysteine 400–cysteine 412, cysteine 418–cysteine 432, cysteine 426–cysteine 442, cysteine 444–cysteine 455, cysteine 471–cysteine 478, cysteine 483–cysteine 503, cysteine 519–cysteine 539, cysteine 542–cysteine 562, cysteine 578–cysteine 598, cysteine 601–cysteine 621, cysteine 639–cysteine 659, cysteine 679–cysteine 699, and cysteine 715–cysteine 936. The N-linked (GlcNAc...) asparagine glycan is linked to asparagine 310. One can recognise an EGF-like 1; calcium-binding domain in the interval 316–354 (DINECAHADPCFPGSSCINTMPGFHCEACPRGYKGTQVS). The 41-residue stretch at 370–410 (DIDECNDGNNGGCDPNSICTNTVGSFKCGPCRLGFLGNQSQ) folds into the EGF-like 2; calcium-binding domain. Asparagine 407 is a glycosylation site (N-linked (GlcNAc...) asparagine). Residues 414-456 (PARTCHSPAHSPCHIHAHCLFERNGAVSCQCNVGWAGNGNVCG) form the EGF-like 3 domain. 8 TSP type-3 repeats span residues 457 to 491 (TDTDIDGYPDQALPCMDNNKHCKQDNCLLTPNSGQ), 492 to 527 (EDADNDGVGDQCDDDADGDGIKNVEDNCRLFPNKDQ), 528 to 550 (QNSDTDSFGDACDNCPNVPNNDQ), 551 to 586 (KDTDGNGEGDACDNDVDGDGIPNGLDNCPKVPNPLQ), 587 to 609 (TDRDEDGVGDACDSCPEMSNPTQ), 610 to 647 (TDADSDLVGDVCDTNEDSDGDGHQDTKDNCPQLPNSSQ), 648 to 687 (LDSDNDGLGDECDGDDDNDGIPDYVPPGPDNCRLVPNPNQ), and 688 to 723 (KDSDGNGVGDVCEDDFDNDAVVDPLDVCPESAEVTL). Disordered stretches follow at residues 518-537 (NCRLFPNKDQQNSDTDSFGD) and 546-702 (PNND…CEDD). The segment covering 555–568 (GNGEGDACDNDVDG) has biased composition (acidic residues). Residues 612–628 (ADSDLVGDVCDTNEDSD) show a composition bias toward acidic residues. The N-linked (GlcNAc...) asparagine glycan is linked to asparagine 644. Over residues 650-667 (SDNDGLGDECDGDDDNDG) the composition is skewed to acidic residues. A TSP C-terminal domain is found at 727–941 (RAYQTVVLDP…LQYRCNDTVP (215 aa)). Asparagine 937 carries N-linked (GlcNAc...) asparagine glycosylation.

It belongs to the thrombospondin family. As to quaternary structure, oligomer; disulfide-linked.

In terms of biological role, adhesive glycoprotein that mediates cell-to-cell and cell-to-matrix interactions. Can bind to fibrinogen, fibronectin, laminin and type V collagen. The polypeptide is Thrombospondin-3 (THBS3) (Homo sapiens (Human)).